The chain runs to 292 residues: Cbb3-type cytochrome c oxidase subunit CcoP (292 aa).

2 helical membrane passes run 11-31 (FGLI…SSLI) and 62-82 (VGWI…FFFG). 2 Cytochrome c domains span residues 116-195 (ELVD…MAEI) and 205-288 (QLID…QSLK). Residues Cys-129, Cys-132, His-133, Met-174, Cys-219, Cys-222, His-223, and Met-264 each contribute to the heme c site.

It belongs to the CcoP / FixP family. In terms of assembly, component of the cbb3-type cytochrome c oxidase at least composed of CcoN, CcoO, CcoQ and CcoP. The cofactor is heme c.

It localises to the cell inner membrane. It participates in energy metabolism; oxidative phosphorylation. Its function is as follows. C-type cytochrome. Part of the cbb3-type cytochrome c oxidase complex. CcoP subunit is required for transferring electrons from donor cytochrome c via its heme groups to CcoO subunit. From there, electrons are shuttled to the catalytic binuclear center of CcoN subunit where oxygen reduction takes place. The complex also functions as a proton pump. This is Cbb3-type cytochrome c oxidase subunit CcoP from Helicobacter pylori (Campylobacter pylori).